We begin with the raw amino-acid sequence, 190 residues long: GTP cyclohydrolase 1 (190 aa).

Cysteine 78, histidine 81, and cysteine 150 together coordinate Zn(2+).

This sequence belongs to the GTP cyclohydrolase I family. As to quaternary structure, toroid-shaped homodecamer, composed of two pentamers of five dimers.

The catalysed reaction is GTP + H2O = 7,8-dihydroneopterin 3'-triphosphate + formate + H(+). The protein operates within cofactor biosynthesis; 7,8-dihydroneopterin triphosphate biosynthesis; 7,8-dihydroneopterin triphosphate from GTP: step 1/1. With respect to regulation, k(+) ions moderately increases the Vmax, whereas UTP and Ca(2+) and Mg(2+) ions drastically increase the Km for GTP. In Bacillus subtilis (strain 168), this protein is GTP cyclohydrolase 1 (folE).